A 675-amino-acid chain; its full sequence is Neurexin-3b-beta (675 aa).

An N-terminal signal peptide occupies residues 1–30 (MRPHFKTRYPQWLSCMLPLVTGCVFGAVWG). The Extracellular portion of the chain corresponds to 31–599 (SNLDSTVVLS…EVIRESSSTT (569 aa)). The Laminin G-like domain maps to 81 to 281 (ATYIFGKGGG…HANIKINGSV (201 aa)). Disordered regions lie at residues 313–337 (TTLS…DIVS) and 490–534 (FKPK…MNNR). The segment covering 325–335 (SPPTIQTTDDI) has biased composition (polar residues). The chain crosses the membrane as a helical span at residues 600-620 (GMVVGIVSAAALCILILLYAM). Residues 621 to 675 (YKYRNRDEGSYQVDETRNYISNSAQNNGTVVKDKQPSTKGASNKRPKDKDKEYYV) are Cytoplasmic-facing. The interval 642-675 (NSAQNNGTVVKDKQPSTKGASNKRPKDKDKEYYV) is disordered. A compositionally biased stretch (basic and acidic residues) spans 665–675 (RPKDKDKEYYV).

It belongs to the neurexin family. Post-translationally, processed by alpha-secretase leading to the formation of an extracellular soluble protein as well as a C-terminal membrane-embedded fragment (CTF). Proteolysis of these CTFs by gamma-secretase releases intracellular domains (ICDs) and extracellular peptides.

The protein localises to the membrane. Functionally, neuronal cell surface protein that may be involved in cell recognition and cell adhesion. The chain is Neurexin-3b-beta (nrxn3b) from Danio rerio (Zebrafish).